The following is a 504-amino-acid chain: Facilitated trehalose transporter Tret1 (504 aa).

The Cytoplasmic segment spans residues 1–39 (MELNNKEDSPRHTVPFVRQITEDGKAKLEIYRPTTNPIY). The helical transmembrane segment at 40 to 60 (IYTQILAAIAVSMGSMVVGFA) threads the bilayer. The Extracellular segment spans residues 61–87 (SAYTSPALVSMQNTTITSFKVTEQEAS). Asn73 carries an N-linked (GlcNAc...) asparagine glycan. Residues 88–108 (WVGGIMPLAGLAGGIAGGPFI) traverse the membrane as a helical segment. The Cytoplasmic segment spans residues 109-120 (EYLGRKNTILAT). A helical transmembrane segment spans residues 121–141 (AVPFIVAWLLIAFANSIWMVL). Topologically, residues 142-145 (AGRA) are extracellular. A helical membrane pass occupies residues 146–166 (LSGFCVGIASLSLPVYLGETV). The Cytoplasmic portion of the chain corresponds to 167 to 171 (QPEVR). The chain crosses the membrane as a helical span at residues 172–192 (GTLGLLPTAFGNIGILICFVA). Topologically, residues 193-199 (GKYVNWS) are extracellular. A glycan (N-linked (GlcNAc...) asparagine) is linked at Asn197. The helical transmembrane segment at 200-220 (GLAFIGSILPIPFMVLTLLIP) threads the bilayer. Over 221–283 (ETPRWFVTRG…DLMKRSNLKP (63 aa)) the chain is Cytoplasmic. A helical transmembrane segment spans residues 284 to 304 (LLIALGLMFFQQLSGINAVIF). The Extracellular segment spans residues 305-320 (YTVSIFKDAGSTIDEN). Residues 321-341 (LCTIIVGVVNFGATFFATVLI) form a helical membrane-spanning segment. The Cytoplasmic segment spans residues 342–347 (DRLGRK). A helical transmembrane segment spans residues 348–368 (ILLYISEVAMVITLLTLGTFF). At 369-387 (YYKNSGNDVSNIGWLPLAS) the chain is on the extracellular side. Residues 388–408 (FVIYVIGFSSGVGPIPWLMLG) form a helical membrane-spanning segment. Over 409–424 (EILPGKIRGSAASVAT) the chain is Cytoplasmic. A helical membrane pass occupies residues 425–445 (GFNWTCTFIVTKTFADIVAAI). At 446–448 (GNH) the chain is on the extracellular side. Residues 449–469 (GAFWFFGVICLIGLFFVIFFV) traverse the membrane as a helical segment. Topologically, residues 470–504 (PETQGKSLEEIERKMMGRVRRMSSVANMKPLSFNM) are cytoplasmic.

This sequence belongs to the major facilitator superfamily. Sugar transporter (TC 2.A.1.1) family. Trehalose transporter subfamily. Highest expression in the fat body. Not expressed in other tissues including the midgut, muscle, and integuments after 24 hours of dehydration.

The protein localises to the cell membrane. High-capacity facilitative transporter for trehalose, required to induce anhydrobiosis. Anhydrobiotic larvae can survive almost complete dehydration. Does not transport maltose, sucrose or lactose. Mediates the bidirectional transfer of trehalose. Responsible for the transport of trehalose synthesized in the fat body and the incorporation of trehalose into other tissues that require a carbon source, thereby regulating trehalose levels in the hemolymph. This Polypedilum vanderplanki (Sleeping chironomid midge) protein is Facilitated trehalose transporter Tret1.